A 251-amino-acid polypeptide reads, in one-letter code: Appressoria-specific virulence factor GAS1 (251 aa).

A signal peptide spans 1 to 21; it reads MSLKSLIAATILAAPLVAGHG. Positions 40–76 are disordered; sequence VTSTPRDGTRRDPFQQDSTRFKGQQADTFGETVGGGQ. Polar residues predominate over residues 54 to 66; it reads QQDSTRFKGQQAD.

The protein resides in the cytoplasm. Its function is as follows. Appressoria-specific virulence factor required for appressorial penetration in host and lesion development. This chain is Appressoria-specific virulence factor GAS1, found in Pyricularia oryzae (strain 70-15 / ATCC MYA-4617 / FGSC 8958) (Rice blast fungus).